Here is a 919-residue protein sequence, read N- to C-terminus: Chaperone protein ClpC2, chloroplastic (919 aa).

Residues 1–54 (MAGTLLQPVALGTTFAGRVSGQRWKSHGTRRPPSMLAMSLSRPVKMAAFVGLRS) constitute a chloroplast transit peptide. The Clp R domain maps to 89-231 (FERFTEKAIK…RTQVIRMIGE (143 aa)). 2 repeat regions span residues 92-157 (FTEK…IGRG) and 167-231 (FTPR…MIGE). The i stretch occupies residues 252 to 499 (LEEYGTNLTK…RVRLRHAQVP (248 aa)). 297–304 (GEPGVGKT) serves as a coordination point for ATP. Residues 506-541 (DKELKQITKDKNEAVRSQDFEKAGELRDREMELKAQ) form the UVR domain. Residues 566–757 (VNEADIQHIV…LLIMTSNVGS (192 aa)) are II. 640-647 (GPTGVGKS) provides a ligand contact to ATP.

It belongs to the ClpA/ClpB family. ClpC subfamily.

It is found in the plastid. Its subcellular location is the chloroplast. Its function is as follows. Molecular chaperone that may interact with a ClpP-like protease involved in degradation of denatured proteins in the chloroplast. In Oryza sativa subsp. japonica (Rice), this protein is Chaperone protein ClpC2, chloroplastic (CLPC2).